A 795-amino-acid chain; its full sequence is Phenylalanine--tRNA ligase beta subunit (795 aa).

A tRNA-binding domain is found at alanine 39 to arginine 148. A B5 domain is found at proline 401–aspartate 476. Mg(2+) is bound by residues aspartate 454, aspartate 460, glutamate 463, and glutamate 464. Residues serine 701 to arginine 794 form the FDX-ACB domain.

Belongs to the phenylalanyl-tRNA synthetase beta subunit family. Type 1 subfamily. In terms of assembly, tetramer of two alpha and two beta subunits. It depends on Mg(2+) as a cofactor.

The protein resides in the cytoplasm. The enzyme catalyses tRNA(Phe) + L-phenylalanine + ATP = L-phenylalanyl-tRNA(Phe) + AMP + diphosphate + H(+). The chain is Phenylalanine--tRNA ligase beta subunit from Shigella flexneri.